The sequence spans 438 residues: Cytochrome P450 monooxygenase claJ (438 aa).

Residue Cys-378 participates in heme binding.

This sequence belongs to the cytochrome P450 family. Requires heme as cofactor.

It functions in the pathway secondary metabolite biosynthesis. Functionally, cytochrome P450 monooxygenase; part of the cla gene cluster that produces clavatol and ortho-quinone methide. The clavatol biosynthesis cluster cla and the terrestric acid cluster tra are both involved in the production of peniphenones and penilactones. The non-reducing PKS claF is responsible for the formation of clavatol from successive condensations of 3 malonyl-CoA units, presumably with a simple acetyl-CoA starter unit, and 2 methylation steps. The esterase claE probably collaborates with claF by catalyzing the hydrolysis of ACP-bound acyl intermediates to free the ACP from stalled intermediates. The clavatol oxidase claD then converts clavatol to hydroxyclavatol. Spontaneous dehydration of hydroxyclavatol leads to the accumulation of the highly active ortho-quinone methide. On the other hand, the PKS-NRPS hybrid traA is involved in the formation of crustosic acid, with the help of traB and traD. The polyketide synthase module (PKS) of traA is responsible for the synthesis of the polyketide backbone via the condensation of an acetyl-CoA starter unit with 3 malonyl-CoA units. The downstream nonribosomal peptide synthetase (NRPS) module then amidates the carboxyl end of the polyketide with L-malic acid. Because traA lacks a designated enoylreductase (ER) domain, the required activity is provided the enoyl reductase traG. Crustosic acid undergoes decarboxylation and isomerization to the terrestric acid, catalyzed by the 2-oxoglutarate-dependent dioxygenase traH. Both acids are further converted to the 2 gamma-butyrolactones (R)-5-methyltetronic acid and (S)-5-carboxylmethyltetronic acid, with involvement of the cytochrome P450 monooxygenase claJ. Spontaneous addition of the methide to these gamma-butyrolactones leads to peniphenone D and penilactone D, which undergo again stereospecific attacking by methide to give penilactones A and B. The chain is Cytochrome P450 monooxygenase claJ from Penicillium crustosum (Blue mold fungus).